A 323-amino-acid polypeptide reads, in one-letter code: Vertebrate ancient opsin (323 aa).

Residues 1-38 (MDTLRIAVNGVSYNEASEIYKPHADPFTGPITNLAPWN) lie on the Extracellular side of the membrane. A helical transmembrane segment spans residues 39–63 (FAVLATLMFVITSLSLFENFTVMLA). Residues 64–75 (TYKFKQLRQPLN) are Cytoplasmic-facing. A helical transmembrane segment spans residues 76–100 (YIIVNLSLADFLVSLTGGTISFLTN). The Extracellular segment spans residues 101-115 (ARGYFFLGNWACVLE). Residues Cys-112 and Cys-189 are joined by a disulfide bond. Residues 116-135 (GFAVTYFGIVAMWSLAVLSF) form a helical membrane-spanning segment. The Cytoplasmic portion of the chain corresponds to 136 to 154 (ERYFVICRPLGNVRLRGKH). Residues 155-178 (AALGLLFVWTFSFIWTIPPVFGWC) traverse the membrane as a helical segment. Residues 179-202 (SYTVSKIGTTCEPNWYSNNIWNHT) are Extracellular-facing. N-linked (GlcNAc...) asparagine glycosylation is present at Asn-200. The chain crosses the membrane as a helical span at residues 203–230 (YIITFFVTCFIMPLGMIIYCYGKLLQKL). The Cytoplasmic portion of the chain corresponds to 231 to 250 (RKVSHDRLGNAKKPERQVSR). A helical transmembrane segment spans residues 251–274 (MVVVMIVAYLVGWTPYAAFSIIVT). Over 275–282 (ACPTIYLD) the chain is Extracellular. A helical membrane pass occupies residues 283-307 (PRLAAAPAFFSKTAAVYNPVIYVFM). Lys-294 bears the N6-(retinylidene)lysine mark. Over 308 to 323 (NKQVSTQLNWGFWSRA) the chain is Cytoplasmic.

Belongs to the G-protein coupled receptor 1 family. Opsin subfamily. Phosphorylated on some or all of the serine and threonine residues present in the C-terminal region.

The protein localises to the membrane. The protein is Vertebrate ancient opsin of Salmo salar (Atlantic salmon).